An 844-amino-acid polypeptide reads, in one-letter code: Translation initiation factor IF-2 (844 aa).

A compositionally biased stretch (polar residues) spans 120 to 132; it reads RNSVNLVQPQQEK. The interval 120-220 is disordered; the sequence is RNSVNLVQPQ…SGKGFKKANP (101 aa). A compositionally biased stretch (basic and acidic residues) spans 161 to 175; that stretch reads DEEKSSEDKSTESKN. The span at 205–219 shows a compositional bias: basic residues; it reads SKAKKASGKGFKKAN. One can recognise a tr-type G domain in the interval 343–510; it reads SRAPVVTIMG…AVLLQSEVLE (168 aa). Positions 352-359 are G1; that stretch reads GHVDHGKT. 352–359 is a GTP binding site; sequence GHVDHGKT. The tract at residues 377–381 is G2; the sequence is GITQH. Residues 398 to 401 are G3; sequence DTPG. Residues 398 to 402 and 452 to 455 contribute to the GTP site; these read DTPGH and NKID. A G4 region spans residues 452 to 455; sequence NKID. Positions 488-490 are G5; sequence SAK.

It belongs to the TRAFAC class translation factor GTPase superfamily. Classic translation factor GTPase family. IF-2 subfamily.

It localises to the cytoplasm. In terms of biological role, one of the essential components for the initiation of protein synthesis. Protects formylmethionyl-tRNA from spontaneous hydrolysis and promotes its binding to the 30S ribosomal subunits. Also involved in the hydrolysis of GTP during the formation of the 70S ribosomal complex. The polypeptide is Translation initiation factor IF-2 (Francisella philomiragia subsp. philomiragia (strain ATCC 25017 / CCUG 19701 / FSC 153 / O#319-036)).